The following is a 470-amino-acid chain: Poly(A) polymerase catalytic subunit (470 aa).

Residues Asp-192 and Asp-194 contribute to the active site.

It belongs to the poxviridae poly(A) polymerase catalytic subunit family. In terms of assembly, heterodimer of a large (catalytic) subunit and a small (regulatory) subunit.

It carries out the reaction RNA(n) + ATP = RNA(n)-3'-adenine ribonucleotide + diphosphate. Its function is as follows. Polymerase that creates the 3'-poly(A) tail of mRNA's. This is Poly(A) polymerase catalytic subunit (PAPL) from Myxoma virus (strain Lausanne) (MYXV).